A 614-amino-acid polypeptide reads, in one-letter code: Translation initiation factor IF-2 (614 aa).

Residues 115-283 (ARAPIVTIMG…ILLIAELNDY (169 aa)) form the tr-type G domain. Positions 124 to 131 (GHVDHGKT) are G1. 124–131 (GHVDHGKT) lines the GTP pocket. The G2 stretch occupies residues 149 to 153 (GITQH). The interval 170–173 (DTPG) is G3. Residues 170 to 174 (DTPGH) and 224 to 227 (NKMD) contribute to the GTP site. Residues 224-227 (NKMD) are G4. The segment at 260 to 262 (SAL) is G5.

Belongs to the TRAFAC class translation factor GTPase superfamily. Classic translation factor GTPase family. IF-2 subfamily.

The protein localises to the cytoplasm. Functionally, one of the essential components for the initiation of protein synthesis. Protects formylmethionyl-tRNA from spontaneous hydrolysis and promotes its binding to the 30S ribosomal subunits. Also involved in the hydrolysis of GTP during the formation of the 70S ribosomal complex. The sequence is that of Translation initiation factor IF-2 from Ureaplasma urealyticum serovar 10 (strain ATCC 33699 / Western).